A 530-amino-acid polypeptide reads, in one-letter code: Putative ABC transporter ATP-binding protein SSO2030 (530 aa).

ABC transporter domains are found at residues 6 to 243 and 282 to 516; these read IRDL…LGLE and ALYA…EPPL. ATP-binding positions include 38–45 and 314–321; these read GRSGSGKS and GKNGSGKT.

Belongs to the ABC transporter superfamily.

The protein localises to the cell membrane. Functionally, probably part of an ABC transporter complex. Responsible for energy coupling to the transport system. This is Putative ABC transporter ATP-binding protein SSO2030 from Saccharolobus solfataricus (strain ATCC 35092 / DSM 1617 / JCM 11322 / P2) (Sulfolobus solfataricus).